The sequence spans 425 residues: Glutamyl-tRNA reductase (425 aa).

Substrate is bound by residues 49–52 (TCNR), S107, 112–114 (EPQ), and Q118. The active-site Nucleophile is C50. Residue 187-192 (GAGETI) participates in NADP(+) binding.

This sequence belongs to the glutamyl-tRNA reductase family. As to quaternary structure, homodimer.

The enzyme catalyses (S)-4-amino-5-oxopentanoate + tRNA(Glu) + NADP(+) = L-glutamyl-tRNA(Glu) + NADPH + H(+). It functions in the pathway porphyrin-containing compound metabolism; protoporphyrin-IX biosynthesis; 5-aminolevulinate from L-glutamyl-tRNA(Glu): step 1/2. Functionally, catalyzes the NADPH-dependent reduction of glutamyl-tRNA(Glu) to glutamate 1-semialdehyde (GSA). The protein is Glutamyl-tRNA reductase of Pseudomonas putida (strain GB-1).